Here is a 483-residue protein sequence, read N- to C-terminus: CBL-interacting serine/threonine-protein kinase 19 (483 aa).

The region spanning 28–282 (YEMGRLLGHG…MPDIMETSWF (255 aa)) is the Protein kinase domain. ATP contacts are provided by residues 34 to 42 (LGHGTFAKV) and lysine 57. Aspartate 150 acts as the Proton acceptor in catalysis. The tract at residues 168–197 (DFGLSAVSDQIRQDGLFHTFCGTPAYVAPE) is activation loop. At serine 172 the chain carries Phosphoserine. Phosphothreonine is present on threonine 186. Residues 313–322 (SVSGRSSTVS) are compositionally biased toward polar residues. The tract at residues 313-338 (SVSGRSSTVSEPEDFESFDGRRRGGS) is disordered. An NAF domain is found at 340 to 364 (PRPASLNAFDLISFSPGFDLSGLFE). The interval 367–396 (GEGSRFVSGAPVGQIISKLEEIARIVSFTV) is PPI. Positions 459-483 (NLSSENGQRVSGSRSLPSFLLSDTD) are disordered.

The protein belongs to the protein kinase superfamily. CAMK Ser/Thr protein kinase family. SNF1 subfamily. Mn(2+) is required as a cofactor.

The catalysed reaction is L-seryl-[protein] + ATP = O-phospho-L-seryl-[protein] + ADP + H(+). It carries out the reaction L-threonyl-[protein] + ATP = O-phospho-L-threonyl-[protein] + ADP + H(+). In terms of biological role, CIPK serine-threonine protein kinases interact with CBL proteins. Binding of a CBL protein to the regulatory NAF domain of CIPK protein lead to the activation of the kinase in a calcium-dependent manner. The sequence is that of CBL-interacting serine/threonine-protein kinase 19 (CIPK19) from Arabidopsis thaliana (Mouse-ear cress).